A 378-amino-acid polypeptide reads, in one-letter code: Ribosomal RNA large subunit methyltransferase G (378 aa).

It belongs to the methyltransferase superfamily. RlmG family.

It localises to the cytoplasm. It carries out the reaction guanosine(1835) in 23S rRNA + S-adenosyl-L-methionine = N(2)-methylguanosine(1835) in 23S rRNA + S-adenosyl-L-homocysteine + H(+). Specifically methylates the guanine in position 1835 (m2G1835) of 23S rRNA. The sequence is that of Ribosomal RNA large subunit methyltransferase G from Salmonella paratyphi B (strain ATCC BAA-1250 / SPB7).